A 334-amino-acid polypeptide reads, in one-letter code: L-lactate dehydrogenase B chain (334 aa).

Residue alanine 2 is modified to N-acetylalanine. Lysine 7 is subject to N6-acetyllysine. 2 positions are modified to phosphoserine: serine 11 and serine 44. NAD(+) is bound by residues 30-58 (GQVG…LEDK) and arginine 100. N6-acetyllysine is present on lysine 58. Arginine 107 provides a ligand contact to substrate. Lysine 119 carries the N6-acetyllysine modification. Residue asparagine 139 participates in NAD(+) binding. Asparagine 139 and arginine 170 together coordinate substrate. Histidine 194 acts as the Proton acceptor in catalysis. At tyrosine 240 the chain carries Phosphotyrosine. Residue threonine 249 participates in substrate binding. Residue lysine 329 is modified to N6-acetyllysine.

This sequence belongs to the LDH/MDH superfamily. LDH family. As to quaternary structure, homotetramer. Interacts with PTEN upstream reading frame protein MP31; the interaction leads to inhibition of mitochondrial lactate dehydrogenase activity, preventing conversion of lactate to pyruvate in mitochondria.

It is found in the cytoplasm. It localises to the mitochondrion inner membrane. It catalyses the reaction (S)-lactate + NAD(+) = pyruvate + NADH + H(+). Its pathway is fermentation; pyruvate fermentation to lactate; (S)-lactate from pyruvate: step 1/1. In terms of biological role, interconverts simultaneously and stereospecifically pyruvate and lactate with concomitant interconversion of NADH and NAD(+). The sequence is that of L-lactate dehydrogenase B chain (Ldhb) from Mus musculus (Mouse).